Reading from the N-terminus, the 212-residue chain is MAKGILGRKIGMTQIFDENGVLIPVTVIDVEGNVVLQQKTVEVDGYQATQVGFESKREKLSNKPELGHVKKANTAPKRFVKEIRFDALNNELLALEVGTEIKADLFTAGEDVDVTGTSKGKGFQGNIKRHNQSRGPMTHGSRYHRGVGSLGAIKGNMKGKNLPGQMGNEQVTVQNLKIVAVDTENDLLLVSGSVPGPRKGYVVVRSAIKKGN.

The disordered stretch occupies residues Thr-117–Arg-142.

It belongs to the universal ribosomal protein uL3 family. Part of the 50S ribosomal subunit. Forms a cluster with proteins L14 and L19.

One of the primary rRNA binding proteins, it binds directly near the 3'-end of the 23S rRNA, where it nucleates assembly of the 50S subunit. In Acholeplasma laidlawii (strain PG-8A), this protein is Large ribosomal subunit protein uL3.